The primary structure comprises 170 residues: Peptide methionine sulfoxide reductase MsrA (170 aa).

Cysteine 14 is a catalytic residue.

This sequence belongs to the MsrA Met sulfoxide reductase family.

The enzyme catalyses L-methionyl-[protein] + [thioredoxin]-disulfide + H2O = L-methionyl-(S)-S-oxide-[protein] + [thioredoxin]-dithiol. It catalyses the reaction [thioredoxin]-disulfide + L-methionine + H2O = L-methionine (S)-S-oxide + [thioredoxin]-dithiol. Its function is as follows. Has an important function as a repair enzyme for proteins that have been inactivated by oxidation. Catalyzes the reversible oxidation-reduction of methionine sulfoxide in proteins to methionine. The polypeptide is Peptide methionine sulfoxide reductase MsrA (Streptomyces avermitilis (strain ATCC 31267 / DSM 46492 / JCM 5070 / NBRC 14893 / NCIMB 12804 / NRRL 8165 / MA-4680)).